A 213-amino-acid polypeptide reads, in one-letter code: High frequency lysogenization protein HflD homolog (213 aa).

Residues Q79–H122 adopt a coiled-coil conformation.

This sequence belongs to the HflD family.

It is found in the cytoplasm. Its subcellular location is the cell inner membrane. This is High frequency lysogenization protein HflD homolog from Salmonella typhi.